The following is a 183-amino-acid chain: MREANPKPRELIRHALKKKKRPEVVYAMGVLLTLGGESGLTVEFPVPEGKTVKVKTLNQLVNGMISRATMTLYCVMKDPPSGGMATLMRDHIRNWLKEESGCQDADGGEEKWAMVYGMISPDMAEEKTMLKELKTMLHSRMQMYALGASSKALENLEKAIVAAVHRLPASCSTEKMVLLGYLK.

The protein localises to the host nucleus. Functionally, may play a role in inhibition of the host immune system by counteracting the type I interferon response. The sequence is that of Protein P7 from Gadus morhua (Atlantic cod).